The sequence spans 158 residues: uncharacterized protein (158 aa).

This is an uncharacterized protein from Archaeoglobus fulgidus (strain ATCC 49558 / DSM 4304 / JCM 9628 / NBRC 100126 / VC-16).